Here is a 370-residue protein sequence, read N- to C-terminus: Actin-related protein 2/3 complex subunit 1A (370 aa).

WD repeat units follow at residues 6-45 (FLLE…WTKA), 50-89 (EHNG…WKPT), 140-179 (PIRS…VDEK), 202-241 (GTGG…QVST), 244-284 (TEFL…TFVS), and 322-365 (LHQN…SSIQ).

Belongs to the WD repeat ARPC1 family. As to quaternary structure, probable component of the Arp2/3 complex in which it may replace ARPC1B.

It localises to the cytoplasm. The protein localises to the cytoskeleton. Its subcellular location is the nucleus. Probably functions as a component of the Arp2/3 complex which is involved in regulation of actin polymerization and together with an activating nucleation-promoting factor (NPF) mediates the formation of branched actin networks. In addition to its role in the cytoplasmic cytoskeleton, the Arp2/3 complex also promotes actin polymerization in the nucleus, thereby regulating gene transcription and repair of damaged DNA. The chain is Actin-related protein 2/3 complex subunit 1A (Arpc1a) from Mus musculus (Mouse).